A 466-amino-acid chain; its full sequence is ATP synthase subunit beta, sodium ion specific (466 aa).

Residue 153-160 (GGAGVGKT) participates in ATP binding.

Belongs to the ATPase alpha/beta chains family. As to quaternary structure, F-type ATPases have 2 components, CF(1) - the catalytic core - and CF(0) - the membrane proton channel. CF(1) has five subunits: alpha(3), beta(3), gamma(1), delta(1), epsilon(1). CF(0) has three main subunits: a, b and c.

It is found in the cell membrane. It carries out the reaction 4 Na(+)(in) + ATP + H2O = 4 Na(+)(out) + ADP + phosphate + H(+). With respect to regulation, inhibited by nitrate. Functionally, produces ATP from ADP in the presence of a sodium ion gradient across the membrane. The beta chain is the catalytic subunit. In Acetobacterium woodii (strain ATCC 29683 / DSM 1030 / JCM 2381 / KCTC 1655 / WB1), this protein is ATP synthase subunit beta, sodium ion specific.